A 328-amino-acid polypeptide reads, in one-letter code: MDYIKQAESTQLSSLSLSRLEGNNAEESKRLLEACAQDGFFYLDLRDHKQLLVDYEALLEIIKQYFNEPLDQKMKDDRKSDTIGYEPVATSAGVLDGLPDYYESFKVSWNQLRDHVQELPTVVETNIEVFDRFAKYVHSILLMILSRLSQTMGRNNDNRFESYHRDSIATRTNLTFLKYPKQDTTEHGVGHNKHTDVGTLTFLLSGQRGLQRLTPEGWCHVEPRSGFAVVNVGDSLRFLSDCVLSSVIHRVLPVGAHQTEDRYTLAYFLRPEDDAVFKDINGNLVSARSWHDRKFDHFRASHNQQKNDTILMGGMEENQKFLQYKFQA.

A Fe2OG dioxygenase domain is found at 170-271 (TRTNLTFLKY…RYTLAYFLRP (102 aa)). Fe cation contacts are provided by histidine 194, aspartate 196, and histidine 249. Residue arginine 262 participates in 2-oxoglutarate binding.

The protein belongs to the iron/ascorbate-dependent oxidoreductase family. The cofactor is Fe(2+).

The protein operates within mycotoxin biosynthesis. Its function is as follows. 2-oxoglutarate-dependent dioxygenase; part of the gene cluster that mediates the biosynthesis of pneumocandins, lipohexapeptides of the echinocandin family that prevent fungal cell wall formation by non-competitive inhibition of beta-1,3-glucan synthase. The 10,12-dimethylmyristoyl side chain is synthesized by the reducing polyketide synthase gloL/GLPKS4. The thioesterase gloN/GLHYD exclusively interacts with gloL/GLPKS4 to maintain turnover of the polyketide side chain. The 10R,12S-dimethylmyristic acid is then transferred to the first thiolation domain of the nonribosomal peptide synthetase gloA/GLNRPS4 by the acyl-AMP ligase gloD/GLligase, followed by its acylation to L-ornithine to trigger elongation of the cyclic hexapeptide. L-ornithine, 4R-hydroxyl-L-proline (generated from L-proline by the dioxygenase gloF/GLOXY2), 3S-hydroxyl-L-homotyrosine (generated by gloG/GLHtyB, gloH/GLHtyA, gloI/GLHtyC, gloJ/GLHtyD and hydroxylated at C-3 by the dioxygenase gloM/GLOXY1), 3R-hydroxyl-L-glutamine (generated from L-glutamine probably by the dioxygenase gloE/GLOXY3) and 3S-hydroxyl-L-proline (generated from L-proline by the dioxygenase gloF/GLOXY2 to yield pneumocandin B0), or 3S-hydroxyl-4S-methyl-L-proline (generated from L-leucine by the dioxygenase gloC/GLOXY4 to yield pneumocandin A0) are sequentially added to the growing chain. The last C domain of gloA/GLNRPS4 is proposed to be responsible for cyclization by condensation to form the peptide bond between L-ornithine and 3S-hydroxyl-4S-methyl-L-proline (for pneumocandin A0) or 3S-hydroxyl-L-proline (for pneumocandin B0). Finally, the subsequent C-4 hydroxylation of 3S-hydroxyl-L-homotyrosine and L-ornithine dihydroxylation at C-4 and C-5 are performed by the cytochrome P450 monooxygenases gloP/GLP450-1 and gloO/GLP450-2, respectively. This Glarea lozoyensis (strain ATCC 20868 / MF5171) protein is 2-oxoglutarate-dependent dioxygenase gloE.